The chain runs to 31 residues: Photosystem II reaction center protein T (31 aa).

A helical membrane pass occupies residues 3 to 23; it reads SVAYIVVLTMALAVLFFAIAF.

Belongs to the PsbT family. PSII is composed of 1 copy each of membrane proteins PsbA, PsbB, PsbC, PsbD, PsbE, PsbF, PsbH, PsbI, PsbJ, PsbK, PsbL, PsbM, PsbT, PsbX, PsbY, PsbZ, Psb30/Ycf12, peripheral proteins PsbO, CyanoQ (PsbQ), PsbU, PsbV and a large number of cofactors. It forms dimeric complexes.

The protein resides in the cellular thylakoid membrane. Functionally, found at the monomer-monomer interface of the photosystem II (PS II) dimer, plays a role in assembly and dimerization of PSII. PSII is a light-driven water plastoquinone oxidoreductase, using light energy to abstract electrons from H(2)O, generating a proton gradient subsequently used for ATP formation. The protein is Photosystem II reaction center protein T of Crocosphaera subtropica (strain ATCC 51142 / BH68) (Cyanothece sp. (strain ATCC 51142)).